Here is a 319-residue protein sequence, read N- to C-terminus: GPI-specific phospholipase A2-like PGAP3 (319 aa).

The first 23 residues, 1-23 (MAGRTARLVLLAGAAALASGSQG), serve as a signal peptide directing secretion. Topologically, residues 24–101 (DREPVYRDCV…GKWPFSRFLC (78 aa)) are lumenal. The N-linked (GlcNAc...) asparagine glycan is linked to asparagine 40. The chain crosses the membrane as a helical span at residues 102–122 (FQEPASAVASFLNGLASLVML). At 123-135 (CRYRTSVPASSPM) the chain is on the cytoplasmic side. A helical membrane pass occupies residues 136 to 156 (YPTCVAFAWVSLNAWFWSTVF). Over 157 to 169 (HTRDTDLTEKMDY) the chain is Lumenal. Residues 170 to 190 (FCASTVILHSIYLCCVRTVGL) form a helical membrane-spanning segment. The Cytoplasmic portion of the chain corresponds to 191–200 (QHPAMASAFR). A helical membrane pass occupies residues 201–221 (ALLLLLLTAHVSYLSLIHFDY). The Lumenal portion of the chain corresponds to 222–224 (GYN). Residues 225–245 (MAANVAIGLLNAAWWLAWCLW) traverse the membrane as a helical segment. Over 246 to 257 (NQRLPHVHKCVA) the chain is Cytoplasmic. The chain crosses the membrane as a helical span at residues 258–278 (VVLLLQGLSLLELLDFPPLFW). The Lumenal portion of the chain corresponds to 279-281 (VLD). A helical membrane pass occupies residues 282–302 (AHAIWHISTIPVHVLFFSFLE). Residues 303-319 (DDSLYLLKESEAKVKLD) are Cytoplasmic-facing.

The protein belongs to the PGAP3 family.

It is found in the golgi apparatus membrane. Involved in the fatty acid remodeling steps of GPI-anchor maturation where the unsaturated acyl chain at sn-2 of inositol phosphate is replaced by a saturated stearoyl chain. May catalyze the first step of the fatty acid remodeling, by removing the unsaturated acyl chain at sn-2 of inositol phosphate, generating a lyso-GPI intermediate. The fatty acid remodeling steps is critical for the integration of GPI-APs into lipid rafts. This Bos taurus (Bovine) protein is GPI-specific phospholipase A2-like PGAP3.